The chain runs to 231 residues: UPF0702 transmembrane protein YetF (231 aa).

Helical transmembrane passes span 5–25 (LSVA…LKLL), 33–53 (ITPF…NAVY), and 59–79 (IKEI…IEFI).

This sequence belongs to the UPF0702 family.

The protein localises to the cell membrane. This chain is UPF0702 transmembrane protein YetF (yetF), found in Bacillus subtilis (strain 168).